The sequence spans 393 residues: tRNA-specific 2-thiouridylase MnmA (393 aa).

ATP is bound by residues 19–26 (AMSGGVDS) and Leu-45. Cys-113 (nucleophile) is an active-site residue. A disulfide bridge connects residues Cys-113 and Cys-210. ATP is bound at residue Gly-137. The tract at residues 160 to 162 (RDQ) is interaction with tRNA. Residue Cys-210 is the Cysteine persulfide intermediate of the active site.

It belongs to the MnmA/TRMU family.

Its subcellular location is the cytoplasm. The enzyme catalyses S-sulfanyl-L-cysteinyl-[protein] + uridine(34) in tRNA + AH2 + ATP = 2-thiouridine(34) in tRNA + L-cysteinyl-[protein] + A + AMP + diphosphate + H(+). Its function is as follows. Catalyzes the 2-thiolation of uridine at the wobble position (U34) of tRNA, leading to the formation of s(2)U34. This is tRNA-specific 2-thiouridylase MnmA from Bradyrhizobium diazoefficiens (strain JCM 10833 / BCRC 13528 / IAM 13628 / NBRC 14792 / USDA 110).